The sequence spans 654 residues: Polyvinylalcohol dehydrogenase (654 aa).

The N-terminal stretch at 1-32 (MGSHAWGGAVFSAATLIAFGSVVHASGTVAET) is a signal peptide. Positions 42-159 (ADQLDGETLY…AANQWNGWST (118 aa)) constitute a Cytochrome c domain. Heme c-binding residues include cysteine 55, cysteine 58, and histidine 59.

Belongs to the bacterial PQQ dehydrogenase family. As to quaternary structure, monomer. It depends on pyrroloquinoline quinone as a cofactor.

It is found in the periplasm. The catalysed reaction is a polyvinyl alcohol + 2n Fe(III)-[cytochrome c] = an oxidized polyvinyl alcohol + 2n Fe(II)-[cytochrome c] + 2n H(+). In terms of biological role, catalyzes the oxidation of polyvinyl alcohol (PVA) in the polyvinyl alcohol degradation pathway. The protein is Polyvinylalcohol dehydrogenase (pvadh) of Sphingopyxis sp. (strain 113P3).